Reading from the N-terminus, the 155-residue chain is Class I hydrophobin C (155 aa).

Positions 1–22 are cleaved as a signal peptide; sequence MLVTMRLSRSIAVFTLVTYATG. Disulfide bonds link C52/C129, C60/C123, C61/C101, and C130/C148.

It belongs to the fungal hydrophobin family. As to quaternary structure, self-assembles to form functional amyloid fibrils called rodlets. Self-assembly into fibrillar rodlets occurs spontaneously at hydrophobic:hydrophilic interfaces and the rodlets further associate laterally to form amphipathic monolayers.

It is found in the secreted. It localises to the spore wall. Its function is as follows. Aerial growth, conidiation, and dispersal of filamentous fungi in the environment rely upon a capability of their secreting small amphipathic proteins called hydrophobins (HPBs) with low sequence identity. Class I can self-assemble into an outermost layer of rodlet bundles on aerial cell surfaces, conferring cellular hydrophobicity that supports fungal growth, development and dispersal; whereas Class II form highly ordered films at water-air interfaces through intermolecular interactions but contribute nothing to the rodlet structure. RodC is a class I hydrophobin that, unlike rodA, is not required for rodlet formation. The chain is Class I hydrophobin C from Aspergillus fumigatus (strain ATCC MYA-4609 / CBS 101355 / FGSC A1100 / Af293) (Neosartorya fumigata).